Reading from the N-terminus, the 258-residue chain is Imidazole glycerol phosphate synthase subunit HisF (258 aa).

Residues aspartate 11 and aspartate 130 contribute to the active site.

The protein belongs to the HisA/HisF family. As to quaternary structure, heterodimer of HisH and HisF.

It is found in the cytoplasm. The catalysed reaction is 5-[(5-phospho-1-deoxy-D-ribulos-1-ylimino)methylamino]-1-(5-phospho-beta-D-ribosyl)imidazole-4-carboxamide + L-glutamine = D-erythro-1-(imidazol-4-yl)glycerol 3-phosphate + 5-amino-1-(5-phospho-beta-D-ribosyl)imidazole-4-carboxamide + L-glutamate + H(+). The protein operates within amino-acid biosynthesis; L-histidine biosynthesis; L-histidine from 5-phospho-alpha-D-ribose 1-diphosphate: step 5/9. Functionally, IGPS catalyzes the conversion of PRFAR and glutamine to IGP, AICAR and glutamate. The HisF subunit catalyzes the cyclization activity that produces IGP and AICAR from PRFAR using the ammonia provided by the HisH subunit. The polypeptide is Imidazole glycerol phosphate synthase subunit HisF (Pectobacterium carotovorum subsp. carotovorum (strain PC1)).